We begin with the raw amino-acid sequence, 619 residues long: CREB-regulated transcription coactivator 3 (619 aa).

Phosphoserine occurs at positions 4 and 62. A disordered region spans residues 129–148 (SQHLDESWPRQQPPWKEEKH). Phosphothreonine is present on Thr-160. Phosphoserine; by SIK2 is present on Ser-162. A Glycyl lysine isopeptide (Lys-Gly) (interchain with G-Cter in SUMO2) cross-link involves residue Lys-232. Residues Ser-273, Ser-329, Ser-332, Ser-370, Ser-391, Ser-396, and Ser-410 each carry the phosphoserine modification. The segment at 375 to 478 (STTNLSGPSR…TQQPQAAPSL (104 aa)) is disordered. The required for interaction with PPP2CA and PPP2R1A stretch occupies residues 380 to 401 (SGPSRRRQPPVSPLTLSPGPEA). 2 stretches are compositionally biased toward polar residues: residues 405 to 415 (FSRQLSATSPL) and 422 to 431 (QMVTSEQSPL). A Phosphoserine modification is found at Ser-443. A compositionally biased stretch (pro residues) spans 443–454 (SPPPPYPTPQEL). The span at 455–478 (PQPLLQQPHAQEPPTQQPQAAPSL) shows a compositional bias: low complexity.

This sequence belongs to the TORC family. As to quaternary structure, binding, as a tetramer, through its N-terminal region, with the bZIP domain of CREB1 enhances recruitment of TAF4 to the promoter. 'Arg-314' in the bZIP domain of CREB1 is essential for this interaction. Interacts (when phosphorylated at Ser-162 and Se-273) with 14-3-3 proteins. Interacts with YWHAE. Interacts (when phosphorylated at Ser-391) with phosphatase PP2A catalytic subunit PPP2CA and regulatory subunits PPP2R1A and PPP2R2A. In terms of processing, phosphorylation/dephosphorylation states of Ser-273 are required for regulating transduction of CREB activity. CRTCs/TORCs are inactive when phosphorylated, and active when dephosphorylated at this site. May be phosphorylated at Ser-391 by MAPK3/ERK1 and/or MAPK1/ERK2 or by some cyclin-dependent kinases such as CDK1,CDK2 or CDK5. Following adenylyl cyclase activation, dephosphorylated at Ser-162 and Ser-273 resulting in its dissociation from 14-3-3 proteins probably promoting CRTC3 translocation into the nucleus. In terms of tissue distribution, expressed in brown adipose tissues.

Its subcellular location is the nucleus. The protein localises to the cytoplasm. Transcriptional coactivator for CREB1 which activates transcription through both consensus and variant cAMP response element (CRE) sites. Acts as a coactivator, in the SIK/TORC signaling pathway, being active when dephosphorylated. Acts independently of CREB1 'Ser-133' phosphorylation. Enhances the interaction of CREB1 with TAF4. Regulates the expression of specific CREB-activated genes such as the steroidogenic gene, StAR. Potent coactivator of PPARGC1A and inducer of mitochondrial biogenesis in muscle cells. The protein is CREB-regulated transcription coactivator 3 (Crtc3) of Mus musculus (Mouse).